Here is a 231-residue protein sequence, read N- to C-terminus: MRGFFVTGTDTEVGKTVISSGLAALLKDNNRHVGVYKPFLSGISRHHPDSDTSLLKDMSQTSLSHEDITPFAFKAPLAPYVAGKLEGKTVTMEEVLSHWGRIREKHECFIVEGAGGISVPLGEDYLVSHVIKALQLPMIIVARPRLGTINHTFLTVKYAESMGLPIAGIIINGISDSPDEDEKTNPEMIERLCGVPILGVTPKLANVTKETVLHMVKDHINLSLLMNQVGV.

12–17 (EVGKTV) contributes to the ATP binding site. Mg(2+) is bound at residue threonine 16. Lysine 37 is a catalytic residue. Serine 41 provides a ligand contact to substrate. ATP is bound by residues aspartate 51, 112-115 (EGAG), and 202-204 (PKL). The Mg(2+) site is built by aspartate 51 and glutamate 112.

Belongs to the dethiobiotin synthetase family. In terms of assembly, homodimer. Mg(2+) is required as a cofactor.

Its subcellular location is the cytoplasm. It catalyses the reaction (7R,8S)-7,8-diammoniononanoate + CO2 + ATP = (4R,5S)-dethiobiotin + ADP + phosphate + 3 H(+). The protein operates within cofactor biosynthesis; biotin biosynthesis; biotin from 7,8-diaminononanoate: step 1/2. Catalyzes a mechanistically unusual reaction, the ATP-dependent insertion of CO2 between the N7 and N8 nitrogen atoms of 7,8-diaminopelargonic acid (DAPA, also called 7,8-diammoniononanoate) to form a ureido ring. The polypeptide is ATP-dependent dethiobiotin synthetase BioD (Bacillus subtilis (strain 168)).